The following is a 790-amino-acid chain: DNA topoisomerase 1 (790 aa).

3 stretches are compositionally biased toward polar residues: residues 1 to 18 (MKSN…SNVM), 44 to 54 (KLSSGALNGNS), and 61 to 70 (SNLSCPSPYT). The disordered stretch occupies residues 1-196 (MKSNPGITVI…KKRPDVSASV (196 aa)). Residues 158–167 (QEEAAADDDP) are compositionally biased toward acidic residues. The segment covering 168 to 181 (SISNRNKKSTTPAS) has biased composition (polar residues). Interaction with DNA regions lie at residues 426 to 427 (KY), 490 to 495 (RAGNEK), and 581 to 583 (TAK). A Topo IB-type catalytic domain is found at 433–790 (SSSLKGKVTR…AMDVVLIFRF (358 aa)). The O-(3'-phospho-DNA)-tyrosine intermediate role is filled by tyrosine 749.

This sequence belongs to the type IB topoisomerase family.

Its subcellular location is the nucleus. It carries out the reaction ATP-independent breakage of single-stranded DNA, followed by passage and rejoining.. In terms of biological role, releases the supercoiling and torsional tension of DNA introduced during the DNA replication and transcription by transiently cleaving and rejoining one strand of the DNA duplex. Introduces a single-strand break via transesterification at a target site in duplex DNA. The scissile phosphodiester is attacked by the catalytic tyrosine of the enzyme, resulting in the formation of a DNA-(3'-phosphotyrosyl)-enzyme intermediate and the expulsion of a 5'-OH DNA strand. The free DNA strand then rotates around the intact phosphodiester bond on the opposing strand, thus removing DNA supercoils. Finally, in the religation step, the DNA 5'-OH attacks the covalent intermediate to expel the active-site tyrosine and restore the DNA phosphodiester backbone. This Daucus carota (Wild carrot) protein is DNA topoisomerase 1 (TOP1).